A 163-amino-acid chain; its full sequence is MASVSQAVRSLFLKEFVNAFFLSMRYFFKQKATVNYPFEKGPVSPRFRGEHALRRYPNGEERCIACKLCEAICPAQAITIEAGPRRNDGTRRTVRYDIDMVKCIYCGFCQEACPVDAIVEGPNFEFSTESREELYFDKAKLLANGDRWEREIARNLAQDAPYR.

4Fe-4S ferredoxin-type domains are found at residues 53-83 (LRRYPNGEERCIACKLCEAICPAQAITIEAG) and 94-123 (VRYDIDMVKCIYCGFCQEACPVDAIVEGPN). [4Fe-4S] cluster-binding residues include Cys-63, Cys-66, Cys-69, Cys-73, Cys-103, Cys-106, Cys-109, and Cys-113.

Belongs to the complex I 23 kDa subunit family. As to quaternary structure, NDH-1 is composed of 14 different subunits. Subunits NuoA, H, J, K, L, M, N constitute the membrane sector of the complex. The cofactor is [4Fe-4S] cluster.

It localises to the cell inner membrane. The catalysed reaction is a quinone + NADH + 5 H(+)(in) = a quinol + NAD(+) + 4 H(+)(out). Functionally, NDH-1 shuttles electrons from NADH, via FMN and iron-sulfur (Fe-S) centers, to quinones in the respiratory chain. The immediate electron acceptor for the enzyme in this species is believed to be ubiquinone. Couples the redox reaction to proton translocation (for every two electrons transferred, four hydrogen ions are translocated across the cytoplasmic membrane), and thus conserves the redox energy in a proton gradient. This Allorhizobium ampelinum (strain ATCC BAA-846 / DSM 112012 / S4) (Agrobacterium vitis (strain S4)) protein is NADH-quinone oxidoreductase subunit I.